A 257-amino-acid polypeptide reads, in one-letter code: Dihydroorotate dehydrogenase B (NAD(+)), electron transfer subunit (257 aa).

Residues Ile-2–Val-101 form the FAD-binding FR-type domain. FAD-binding positions include Arg-52–Ser-55, Ile-69–Arg-71, and Gly-76–Thr-77. Cys-220, Cys-225, Cys-228, and Cys-244 together coordinate [2Fe-2S] cluster.

The protein belongs to the PyrK family. Heterotetramer of 2 PyrK and 2 PyrD type B subunits. [2Fe-2S] cluster serves as cofactor. The cofactor is FAD.

Its pathway is pyrimidine metabolism; UMP biosynthesis via de novo pathway; orotate from (S)-dihydroorotate (NAD(+) route): step 1/1. Its function is as follows. Responsible for channeling the electrons from the oxidation of dihydroorotate from the FMN redox center in the PyrD type B subunit to the ultimate electron acceptor NAD(+). This Lysinibacillus sphaericus (strain C3-41) protein is Dihydroorotate dehydrogenase B (NAD(+)), electron transfer subunit.